Here is a 620-residue protein sequence, read N- to C-terminus: MASDSMSSKQARNHITKGKRQQQHQQIKNRSSISDGDGEDSFIFEANEAWKDFHGSLLRFYENGELCDVTLKVGSKLISCHKLVLACVIPYFRAMFLSEMAEAKQTLIEIRDFDGDAIEDLVKFVYSSRLTLTVDNVQPLLYAACILQVELVARACCEYMKLHFHPSNCLAVRAFAESHNRIDLMDMADQYACDHFTEVVECEDFVSVSPQHLHKLLSSSDLNIENEKQVYNAAIKWLLANPQHHSKWLDETLAQVRLPLLPVDFLMGVVAKEQIVKQNLKCRDLLDEARNYHLHLSSRAVPDFEYSIRTTPRKHTAGVLFCVGGRGGSGDPFRSIECYSINKNSWFFGPEMNSRRRHVGVISVEGKVYAVGGHDGNEHLGSMEMFDPLTNKWMMKASMNTKRRGIALASLGGPIYAIGGLDDNTCFNDVERYDIESDQWSTVAPMNTPRGGVGSVALVNHVYAVGGNDGMASLSSVERYDPHLDKWIEVKEMGQRRAGNGVSKLHGCLYVVGGFDDNSPLSSVERYDPRSNKWDYVAALTTPRGGVGIATVMGKIFAVGGHNGNAYLNTVEAFDPVLNRWELVGSVSHCRAGAGVAVCSCLTSQIRDVGHGSNNVVDCM.

Polar residues predominate over residues 1 to 10; it reads MASDSMSSKQ. The segment at 1 to 35 is disordered; it reads MASDSMSSKQARNHITKGKRQQQHQQIKNRSSISD. Residue Ala-2 is modified to N-acetylalanine. Residues 11–22 show a composition bias toward basic residues; it reads ARNHITKGKRQQ. Residues 23-34 are compositionally biased toward polar residues; sequence QHQQIKNRSSIS. Residues 67–134 form the BTB domain; that stretch reads CDVTLKVGSK…VYSSRLTLTV (68 aa). The BACK domain occupies 169–270; it reads CLAVRAFAES…LPVDFLMGVV (102 aa). 6 Kelch repeats span residues 319 to 366, 367 to 413, 415 to 460, 462 to 507, 508 to 554, and 556 to 601; these read VLFC…SVEG, KVYA…SLGG, IYAI…ALVN, VYAV…KLHG, CLYV…TVMG, and IFAV…VCSC.

Component of the BCR(KLHL8) E3 ubiquitin ligase complex, at least composed of CUL3, KLHL8 and RBX1. Interacts with RAPSN.

Its pathway is protein modification; protein ubiquitination. In terms of biological role, substrate-specific adapter of a BCR (BTB-CUL3-RBX1) E3 ubiquitin ligase complex required for The BCR(KLHL8) ubiquitin ligase complex mediates ubiquitination and degradation of RAPSN. This is Kelch-like protein 8 (KLHL8) from Homo sapiens (Human).